The following is a 105-amino-acid chain: Met repressor (105 aa).

This sequence belongs to the MetJ family. As to quaternary structure, homodimer.

It is found in the cytoplasm. This regulatory protein, when combined with SAM (S-adenosylmethionine) represses the expression of the methionine regulon and of enzymes involved in SAM synthesis. This chain is Met repressor, found in Citrobacter koseri (strain ATCC BAA-895 / CDC 4225-83 / SGSC4696).